Reading from the N-terminus, the 381-residue chain is 3-dehydroquinate synthase (381 aa).

NAD(+) contacts are provided by residues 81 to 86 (EGEVSK), 115 to 119 (GVVGD), 139 to 140 (TS), Lys-152, and Lys-161. Zn(2+)-binding residues include Glu-194, His-256, and His-274.

The protein belongs to the sugar phosphate cyclases superfamily. Dehydroquinate synthase family. The cofactor is Co(2+). It depends on Zn(2+) as a cofactor. Requires NAD(+) as cofactor.

The protein localises to the cytoplasm. It catalyses the reaction 7-phospho-2-dehydro-3-deoxy-D-arabino-heptonate = 3-dehydroquinate + phosphate. Its pathway is metabolic intermediate biosynthesis; chorismate biosynthesis; chorismate from D-erythrose 4-phosphate and phosphoenolpyruvate: step 2/7. Catalyzes the conversion of 3-deoxy-D-arabino-heptulosonate 7-phosphate (DAHP) to dehydroquinate (DHQ). The protein is 3-dehydroquinate synthase of Rhodopseudomonas palustris (strain BisA53).